The primary structure comprises 673 residues: Translation factor GUF1 homolog, mitochondrial (673 aa).

In terms of domain architecture, tr-type G spans 68–260 (ERIRNFSIIA…AVIERIPSPP (193 aa)). Residues 77–84 (AHVDHGKS), 153–157 (DTPGH), and 207–210 (NKID) each bind GTP.

Belongs to the TRAFAC class translation factor GTPase superfamily. Classic translation factor GTPase family. LepA subfamily.

It is found in the mitochondrion inner membrane. It carries out the reaction GTP + H2O = GDP + phosphate + H(+). In terms of biological role, promotes mitochondrial protein synthesis. May act as a fidelity factor of the translation reaction, by catalyzing a one-codon backward translocation of tRNAs on improperly translocated ribosomes. Binds to mitochondrial ribosomes in a GTP-dependent manner. The protein is Translation factor GUF1 homolog, mitochondrial of Ricinus communis (Castor bean).